The following is a 130-amino-acid chain: Protein ApaG (130 aa).

An ApaG domain is found at 3-127 (RALTRDIEVT…FSLDSPGLVR (125 aa)).

The chain is Protein ApaG from Rhizobium meliloti (strain 1021) (Ensifer meliloti).